The following is a 376-amino-acid chain: Glycerol-3-phosphate acyltransferase 9 (376 aa).

The Cytoplasmic segment spans residues 1–78; it reads MSSTAGRLVT…SNPPEPWNWN (78 aa). Serine 13 bears the Phosphoserine mark. Helical transmembrane passes span 79 to 99, 102 to 122, and 135 to 155; these read IYLFPLYCFGVVVRYCILFPL, FTLAFGWIIFLSLFIPVNALL, and VLVEMICSFFVASWTGVVKYH. Residues 156-376 lie on the Cytoplasmic side of the membrane; sequence GPRPSIRPKQ…ESILARLEEK (221 aa). Residues 168–180 form a catalytic region; the sequence is VANHTSMIDFIVL. An HXXXXD motif motif is present at residues 171–176; it reads HTSMID. Residue 209 to 218 coordinates sn-glycerol 3-phosphate; it reads GCIWFNRSEA. A glycerol-3-phosphate binding region spans residues 242–262; it reads IFPEGTCVNNNYTVMFKKGAF. The tract at residues 266–275 is catalytic; sequence CTVCPIAIKY. The endoplasmic reticulum targeting stretch occupies residues 369–373; the sequence is ILARL.

It belongs to the 1-acyl-sn-glycerol-3-phosphate acyltransferase family. Self-interacts. Interacts with LPAT2 and LPCAT2. In terms of tissue distribution, up-regulated during embryogenesis. Expressed in seedlings, leaves, stems, roots, floral buds, flowers, pollen, and siliques at various developmental stages.

Its subcellular location is the endoplasmic reticulum membrane. The catalysed reaction is sn-glycerol 3-phosphate + an acyl-CoA = a 1-acyl-sn-glycero-3-phosphate + CoA. The protein operates within glycerolipid metabolism; triacylglycerol biosynthesis. Essential protein. Required for male and female gametophytes development. Exhibits sn-1 acyltransferase activity with high specificity for acyl-coenzyme A, thus triggering storage lipid biosynthesis and playing an important role in the Kennedy pathway of glycerolipid biosynthesis. Catalyzes triacylglycerol (TAG) accumulation involved in membrane lipid and oil biosynthesis, especially in seeds. Also contributes to the biosynthesis of both polar lipids and TAG in developing leaves, as well as lipid droplet production in developing pollen grains. Seems to not contribute to surface lipid biosynthesis (e.g. waxes and cutin). The protein is Glycerol-3-phosphate acyltransferase 9 of Arabidopsis thaliana (Mouse-ear cress).